We begin with the raw amino-acid sequence, 116 residues long: Large ribosomal subunit protein bL17 (116 aa).

It belongs to the bacterial ribosomal protein bL17 family. In terms of assembly, part of the 50S ribosomal subunit. Contacts protein L32.

The protein is Large ribosomal subunit protein bL17 of Sulfurimonas denitrificans (strain ATCC 33889 / DSM 1251) (Thiomicrospira denitrificans (strain ATCC 33889 / DSM 1251)).